Reading from the N-terminus, the 314-residue chain is 4-diphosphocytidyl-2-C-methyl-D-erythritol kinase (314 aa).

Lysine 11 is a catalytic residue. 95 to 105 (PIGAGLAGGST) lines the ATP pocket. Residue aspartate 137 is part of the active site.

This sequence belongs to the GHMP kinase family. IspE subfamily.

The catalysed reaction is 4-CDP-2-C-methyl-D-erythritol + ATP = 4-CDP-2-C-methyl-D-erythritol 2-phosphate + ADP + H(+). The protein operates within isoprenoid biosynthesis; isopentenyl diphosphate biosynthesis via DXP pathway; isopentenyl diphosphate from 1-deoxy-D-xylulose 5-phosphate: step 3/6. Functionally, catalyzes the phosphorylation of the position 2 hydroxy group of 4-diphosphocytidyl-2C-methyl-D-erythritol. This Synechococcus elongatus (strain ATCC 33912 / PCC 7942 / FACHB-805) (Anacystis nidulans R2) protein is 4-diphosphocytidyl-2-C-methyl-D-erythritol kinase.